The following is a 573-amino-acid chain: Septation ring formation regulator EzrA (573 aa).

The Extracellular segment spans residues 1–2; sequence MQ. A helical membrane pass occupies residues 3-21; that stretch reads VAIGIVVVAIVIYAAVKGF. The Cytoplasmic segment spans residues 22–573; the sequence is QFYIDKQVRQ…KQADKMNDEA (552 aa). Coiled-coil stretches lie at residues 100–188, 317–364, and 416–488; these read DAQQ…LAKA, LTHA…VYQA, and ETLQ…TLKE.

This sequence belongs to the EzrA family.

The protein resides in the cell membrane. Negative regulator of FtsZ ring formation; modulates the frequency and position of FtsZ ring formation. Inhibits FtsZ ring formation at polar sites. Interacts either with FtsZ or with one of its binding partners to promote depolymerization. This is Septation ring formation regulator EzrA from Lactiplantibacillus plantarum (strain ATCC BAA-793 / NCIMB 8826 / WCFS1) (Lactobacillus plantarum).